A 293-amino-acid polypeptide reads, in one-letter code: 4-diphosphocytidyl-2-C-methyl-D-erythritol kinase (293 aa).

Lys-11 is an active-site residue. 96-106 (PVAAGLGGGSS) lines the ATP pocket. Asp-138 is an active-site residue.

Belongs to the GHMP kinase family. IspE subfamily.

The enzyme catalyses 4-CDP-2-C-methyl-D-erythritol + ATP = 4-CDP-2-C-methyl-D-erythritol 2-phosphate + ADP + H(+). The protein operates within isoprenoid biosynthesis; isopentenyl diphosphate biosynthesis via DXP pathway; isopentenyl diphosphate from 1-deoxy-D-xylulose 5-phosphate: step 3/6. Its function is as follows. Catalyzes the phosphorylation of the position 2 hydroxy group of 4-diphosphocytidyl-2C-methyl-D-erythritol. The protein is 4-diphosphocytidyl-2-C-methyl-D-erythritol kinase of Xanthobacter autotrophicus (strain ATCC BAA-1158 / Py2).